Reading from the N-terminus, the 1013-residue chain is Prominin-like protein (1013 aa).

Residues 32 to 52 (IAYLAICGLSVAIFGFALATL) form a helical membrane-spanning segment. 2 N-linked (GlcNAc...) asparagine glycosylation sites follow: asparagine 99 and asparagine 116. 3 consecutive transmembrane segments (helical) span residues 215-235 (CGICLLILIIGLIFGIIIAFV), 489-509 (VVSLIVCLLILLVLFILIFAL), and 535-555 (LLLAILLIFCVFSFIALVGLF). Residues asparagine 576, asparagine 618, asparagine 803, and asparagine 824 are each glycosylated (N-linked (GlcNAc...) asparagine). The helical transmembrane segment at 852–872 (INGFWVGILLCALLFLPILFV) threads the bilayer. Residues 918 to 1013 (ANVPKKRRKA…YYYPGASEQD (96 aa)) form a disordered region. Asparagine 949 carries an N-linked (GlcNAc...) asparagine glycan. Residues 950–963 (RSGGDRGGGGGDGA) show a composition bias toward gly residues.

It belongs to the prominin family.

Its subcellular location is the membrane. This is Prominin-like protein from Drosophila melanogaster (Fruit fly).